A 163-amino-acid polypeptide reads, in one-letter code: Large ribosomal subunit protein bL21 (163 aa).

Residues 124–163 (KETTKKTKATVSIKKTAKKPSEKKSAPQKKAAVVSNNKED) are disordered.

It belongs to the bacterial ribosomal protein bL21 family. As to quaternary structure, part of the 50S ribosomal subunit. Contacts protein L20.

In terms of biological role, this protein binds to 23S rRNA in the presence of protein L20. In Bartonella quintana (strain Toulouse) (Rochalimaea quintana), this protein is Large ribosomal subunit protein bL21.